A 790-amino-acid polypeptide reads, in one-letter code: Nuclear cap-binding protein subunit 1 (790 aa).

Residues 1–26 form a disordered region; that stretch reads MSRRRHSYENDGGQPHKRRKTSDANE. The short motif at 3–20 is the Nuclear localization signal element; it reads RRRHSYENDGGQPHKRRK. S7 is subject to Phosphoserine. Residue T21 is modified to Phosphothreonine. Residues S22 and S201 each carry the phosphoserine modification. An MIF4G domain is found at 28 to 240; that stretch reads EDHLESLICK…CLWAQIQKLK (213 aa). K204 is modified (N6-acetyllysine). The stretch at 643–713 forms a coiled coil; sequence STIRKMNKHV…SEQKNLFLVI (71 aa). K684 is covalently cross-linked (Glycyl lysine isopeptide (Lys-Gly) (interchain with G-Cter in SUMO2)). At K698 the chain carries N6-acetyllysine.

Belongs to the NCBP1 family. Component of the nuclear cap-binding complex (CBC), a heterodimer composed of NCBP1/CBP80 and NCBP2/CBP20 that interacts with m7GpppG-capped RNA. Found in a U snRNA export complex containing PHAX/RNUXA, NCBP1/CBP80, NCBP2/CBP20, RAN, XPO1 and m7G-capped RNA. Identified in a IGF2BP1-dependent mRNP granule complex containing untranslated mRNAs. Interacts with PHAX/RNUXA, SRRT/ARS2, EIF4G2, IGF2BP1, HNRNPF, HNRNPH1, KIAA0427/CTIF, PARN, DROSHA, UPF1 and ALYREF/THOC4. May interact with EIF4G1; the interaction is however controversial since it is reported by, and, but is not observed by. The large PER complex involved in the repression of transcriptional termination is composed of at least PER2, CDK9, DDX5, DHX9, NCBP1/CBP80 and POLR2A. Component of an alternative nuclear cap-binding complex (CBC) composed of NCBP1/CBP80 and NCBP3. Interacts with METTL3. Interacts with ZFC3H1 in a RNase-insensitive manner. Interacts with MTREX. Interacts with TASOR. Interacts with DHX34; the interaction is RNA-dependent. Interacts with KPNA3. In terms of processing, dephosphorylated at Thr-21 by the PNUTS-PP1 complex during RNA polymerase II transcription pause-release.

The protein localises to the nucleus. Its subcellular location is the cytoplasm. Functionally, component of the cap-binding complex (CBC), which binds cotranscriptionally to the 5'-cap of pre-mRNAs and is involved in various processes such as pre-mRNA splicing, translation regulation, nonsense-mediated mRNA decay, RNA-mediated gene silencing (RNAi) by microRNAs (miRNAs) and mRNA export. The CBC complex is involved in mRNA export from the nucleus via its interaction with ALYREF/THOC4/ALY, leading to the recruitment of the mRNA export machinery to the 5'-end of mRNA and to mRNA export in a 5' to 3' direction through the nuclear pore. The CBC complex is also involved in mediating U snRNA and intronless mRNAs export from the nucleus. The CBC complex is essential for a pioneer round of mRNA translation, before steady state translation when the CBC complex is replaced by cytoplasmic cap-binding protein eIF4E. The pioneer round of mRNA translation mediated by the CBC complex plays a central role in nonsense-mediated mRNA decay (NMD), NMD only taking place in mRNAs bound to the CBC complex, but not on eIF4E-bound mRNAs. The CBC complex enhances NMD in mRNAs containing at least one exon-junction complex (EJC) via its interaction with UPF1, promoting the interaction between UPF1 and UPF2. The CBC complex is also involved in 'failsafe' NMD, which is independent of the EJC complex, while it does not participate in Staufen-mediated mRNA decay (SMD). During cell proliferation, the CBC complex is also involved in microRNAs (miRNAs) biogenesis via its interaction with SRRT/ARS2 and is required for miRNA-mediated RNA interference. The CBC complex also acts as a negative regulator of PARN, thereby acting as an inhibitor of mRNA deadenylation. In the CBC complex, NCBP1/CBP80 does not bind directly capped RNAs (m7GpppG-capped RNA) but is required to stabilize the movement of the N-terminal loop of NCBP2/CBP20 and lock the CBC into a high affinity cap-binding state with the cap structure. Associates with NCBP3 to form an alternative cap-binding complex (CBC) which plays a key role in mRNA export and is particularly important in cellular stress situations such as virus infections. The conventional CBC with NCBP2 binds both small nuclear RNA (snRNA) and messenger (mRNA) and is involved in their export from the nucleus whereas the alternative CBC with NCBP3 does not bind snRNA and associates only with mRNA thereby playing a role only in mRNA export. NCBP1/CBP80 is required for cell growth and viability. The polypeptide is Nuclear cap-binding protein subunit 1 (Ncbp1) (Rattus norvegicus (Rat)).